A 355-amino-acid chain; its full sequence is tRNA N6-adenosine threonylcarbamoyltransferase (355 aa).

Positions 110 and 114 each coordinate Fe cation. Substrate contacts are provided by residues 132–136 (LVSGG), Asp165, Gly178, Asp182, and Asn288. Asp316 contacts Fe cation.

This sequence belongs to the KAE1 / TsaD family. Requires Fe(2+) as cofactor.

The protein localises to the cytoplasm. The catalysed reaction is L-threonylcarbamoyladenylate + adenosine(37) in tRNA = N(6)-L-threonylcarbamoyladenosine(37) in tRNA + AMP + H(+). In terms of biological role, required for the formation of a threonylcarbamoyl group on adenosine at position 37 (t(6)A37) in tRNAs that read codons beginning with adenine. Is involved in the transfer of the threonylcarbamoyl moiety of threonylcarbamoyl-AMP (TC-AMP) to the N6 group of A37, together with TsaE and TsaB. TsaD likely plays a direct catalytic role in this reaction. This Lawsonia intracellularis (strain PHE/MN1-00) protein is tRNA N6-adenosine threonylcarbamoyltransferase.